We begin with the raw amino-acid sequence, 127 residues long: Large ribosomal subunit protein bL20 (127 aa).

This sequence belongs to the bacterial ribosomal protein bL20 family.

Functionally, binds directly to 23S ribosomal RNA and is necessary for the in vitro assembly process of the 50S ribosomal subunit. It is not involved in the protein synthesizing functions of that subunit. The chain is Large ribosomal subunit protein bL20 from Corynebacterium urealyticum (strain ATCC 43042 / DSM 7109).